A 162-amino-acid chain; its full sequence is Cytochrome c-type biogenesis protein CcmE (162 aa).

The Cytoplasmic segment spans residues 1 to 8; it reads MNPRRKKR. Residues 9–29 form a helical; Signal-anchor for type II membrane protein membrane-spanning segment; sequence LTLAVALIGGVAAIASLLLYA. Residues 30-162 are Periplasmic-facing; the sequence is LNSNLNLFYT…YSQQKAPDTK (133 aa). Residues histidine 131 and tyrosine 135 each coordinate heme. The interval 139–162 is disordered; that stretch reads EVAEAMGQKHEKLDYSQQKAPDTK. The span at 153-162 shows a compositional bias: polar residues; sequence YSQQKAPDTK.

The protein belongs to the CcmE/CycJ family.

It localises to the cell inner membrane. In terms of biological role, heme chaperone required for the biogenesis of c-type cytochromes. Transiently binds heme delivered by CcmC and transfers the heme to apo-cytochromes in a process facilitated by CcmF and CcmH. In Shewanella putrefaciens (strain CN-32 / ATCC BAA-453), this protein is Cytochrome c-type biogenesis protein CcmE.